The sequence spans 163 residues: Probable chemoreceptor glutamine deamidase CheD (163 aa).

The protein belongs to the CheD family.

The enzyme catalyses L-glutaminyl-[protein] + H2O = L-glutamyl-[protein] + NH4(+). In terms of biological role, probably deamidates glutamine residues to glutamate on methyl-accepting chemotaxis receptors (MCPs), playing an important role in chemotaxis. The protein is Probable chemoreceptor glutamine deamidase CheD of Pyrococcus abyssi (strain GE5 / Orsay).